The primary structure comprises 260 residues: Ubiquinone/menaquinone biosynthesis C-methyltransferase UbiE (260 aa).

Residues Thr-83, Asp-104, and 132 to 133 each bind S-adenosyl-L-methionine; that span reads NA.

The protein belongs to the class I-like SAM-binding methyltransferase superfamily. MenG/UbiE family.

It catalyses the reaction a 2-demethylmenaquinol + S-adenosyl-L-methionine = a menaquinol + S-adenosyl-L-homocysteine + H(+). The catalysed reaction is a 2-methoxy-6-(all-trans-polyprenyl)benzene-1,4-diol + S-adenosyl-L-methionine = a 5-methoxy-2-methyl-3-(all-trans-polyprenyl)benzene-1,4-diol + S-adenosyl-L-homocysteine + H(+). Its pathway is quinol/quinone metabolism; menaquinone biosynthesis; menaquinol from 1,4-dihydroxy-2-naphthoate: step 2/2. It participates in cofactor biosynthesis; ubiquinone biosynthesis. Methyltransferase required for the conversion of demethylmenaquinol (DMKH2) to menaquinol (MKH2) and the conversion of 2-polyprenyl-6-methoxy-1,4-benzoquinol (DDMQH2) to 2-polyprenyl-3-methyl-6-methoxy-1,4-benzoquinol (DMQH2). The chain is Ubiquinone/menaquinone biosynthesis C-methyltransferase UbiE from Bartonella tribocorum (strain CIP 105476 / IBS 506).